The chain runs to 409 residues: MASGKATGKTDAPAPVIKLGGPRPPKVGSSGNASWFQAIKAKKLNSPQPKFEGSGVPDNENLKTSQQHGYWRRQARFKPGKGGRKPVPDAWYFYYTGTGPAADLNWGDSQDGIVWVAAKGADVKSRSNQGTRDPDKFDQYPLRFSDGGPDGNFRWDFIPLNRGRSGRSTAASSAASSRPPSREGSRGRRSGSEDDLIARAAKIIQDQQKKGSRITKAKADEMAHRRYCKRTIPPGYKVDQVFGPRTKGKEGNFGDDKMNEEGIKDGRVTAMLNLVPSSHACLFGSRVTPKLQPDGLHLKFEFTTVVPRDDPQFDNYVKICDQCVDGVGTRPKDDEPKPKSRSSSRPATRTSSPAPRQQRLKKEKRPKKQDDEVDKALTSDEERNNAQLEFDDEPKVINWGDSALGENEL.

Disordered regions lie at residues 1 to 32 (MASG…SSGN), 44 to 69 (LNSP…QQHG), 121 to 194 (ADVK…GSED), and 238 to 259 (VDQV…DKMN). The segment at 29-160 (SSGNASWFQA…GNFRWDFIPL (132 aa)) is RNA-binding. The 126-residue stretch at 31 to 156 (GNASWFQAIK…GGPDGNFRWD (126 aa)) folds into the CoV N NTD domain. The span at 162–179 (RGRSGRSTAASSAASSRP) shows a compositional bias: low complexity. 2 stretches are compositionally biased toward basic and acidic residues: residues 180-192 (PSRE…RSGS) and 247-259 (KGKE…DKMN). Residues Ser-190 and Ser-192 each carry the phosphoserine; by host modification. One can recognise a CoV N CTD domain in the interval 215–331 (TKAKADEMAH…QCVDGVGTRP (117 aa)). Positions 226 to 333 (RYCKRTIPPG…VDGVGTRPKD (108 aa)) are dimerization. A disulfide bridge links Cys-320 with Cys-323. Residues 326–409 (GVGTRPKDDE…GDSALGENEL (84 aa)) are disordered. Residues 341-356 (RSSSRPATRTSSPAPR) are compositionally biased toward low complexity. A compositionally biased stretch (basic residues) spans 358 to 367 (QRLKKEKRPK). Basic and acidic residues predominate over residues 368-384 (KQDDEVDKALTSDEERN). Thr-378 bears the Phosphothreonine; by host mark. Ser-379 carries the post-translational modification Phosphoserine; by host.

It belongs to the gammacoronavirus nucleocapsid protein family. As to quaternary structure, homooligomer. Both monomeric and oligomeric forms interact with RNA. Interacts with protein M. Interacts with NSP3; this interaction serves to tether the genome to the newly translated replicase-transcriptase complex at a very early stage of infection. Post-translationally, ADP-ribosylated. The ADP-ribosylation is retained in the virion during infection. In terms of processing, phosphorylated on serine and threonine residues.

The protein resides in the virion. The protein localises to the host endoplasmic reticulum-Golgi intermediate compartment. It is found in the host Golgi apparatus. Functionally, packages the positive strand viral genome RNA into a helical ribonucleocapsid (RNP) and plays a fundamental role during virion assembly through its interactions with the viral genome and membrane protein M. Plays an important role in enhancing the efficiency of subgenomic viral RNA transcription as well as viral replication. This chain is Nucleoprotein, found in Gallus gallus (Chicken).